The sequence spans 600 residues: 69 kDa paraflagellar rod protein (600 aa).

The interval 335–355 (DKQDEAWRRIQELERVLQRLG) is calmodulin-binding.

In terms of assembly, heterodimer of a 69 kDa and a 73 kDa protein.

It is found in the cell projection. The protein localises to the cilium. Its subcellular location is the flagellum. It localises to the cytoplasm. The protein resides in the cytoskeleton. In terms of biological role, major component of the paraflagellar rod (PFR). The PFR is a highly ordered lattices of fibrous proteins that are located inside the flagellum and assume a fixed orientation with respect to the microtubular axoneme. The sequence is that of 69 kDa paraflagellar rod protein (PFRA) from Trypanosoma brucei brucei.